A 255-amino-acid chain; its full sequence is Aliphatic sulfonates import ATP-binding protein SsuB (255 aa).

Residues Leu-12 to Leu-233 form the ABC transporter domain. Position 44–51 (Gly-44–Ser-51) interacts with ATP.

It belongs to the ABC transporter superfamily. Aliphatic sulfonates importer (TC 3.A.1.17.2) family. As to quaternary structure, the complex is composed of two ATP-binding proteins (SsuB), two transmembrane proteins (SsuC) and a solute-binding protein (SsuA).

It is found in the cell inner membrane. It catalyses the reaction ATP + H2O + aliphatic sulfonate-[sulfonate-binding protein]Side 1 = ADP + phosphate + aliphatic sulfonateSide 2 + [sulfonate-binding protein]Side 1.. Functionally, part of the ABC transporter complex SsuABC involved in aliphatic sulfonates import. Responsible for energy coupling to the transport system. In Shigella sonnei (strain Ss046), this protein is Aliphatic sulfonates import ATP-binding protein SsuB.